We begin with the raw amino-acid sequence, 617 residues long: Serine/threonine-protein kinase par-4 (617 aa).

Positions 1-11 (MDAPSTSSGAQ) are enriched in polar residues. The segment at 1–59 (MDAPSTSSGAQSKLLMPGDDEADEDHQNRGDPNLQQKQKIQLNVDPDYDDDEDDDCFID) is disordered. Over residues 46–57 (PDYDDDEDDDCF) the composition is skewed to acidic residues. The region spanning 183–446 (YMWGGQIGTG…CLETMIHPWF (264 aa)) is the Protein kinase domain. ATP-binding positions include 189–197 (IGTGSYGKV) and K212. D310 functions as the Proton acceptor in the catalytic mechanism. The interval 523–617 (LEAKPGDGPD…CIFRSRTDSA (95 aa)) is disordered. Pro residues predominate over residues 587-597 (DPPPTAAPGAP).

It belongs to the protein kinase superfamily. CAMK Ser/Thr protein kinase family. LKB1 subfamily. Interacts with strd-1. Mg(2+) serves as cofactor. Mn(2+) is required as a cofactor. In terms of tissue distribution, expressed in the gonads, oocytes and early embryos (at protein level).

Its subcellular location is the cytoplasm. It is found in the cell cortex. It carries out the reaction L-seryl-[protein] + ATP = O-phospho-L-seryl-[protein] + ADP + H(+). The catalysed reaction is L-threonyl-[protein] + ATP = O-phospho-L-threonyl-[protein] + ADP + H(+). In terms of biological role, required for cytoplasmic partitioning and asymmetric cell division in early embryogenesis. Controls the asymmetric cell division of the Q.p neuroblast lineage. Involved in mediating cell polarization via regulation of anillin family scaffold proteins. Phosphorylates and restricts the asymmetry effectors mex-5 and mex-6 to the anterior cytoplasm of the zygote and maintains these phosphorylations until fertilization. May phosphorylate par-1. Required for strd-1 localization to the cell cortex of early embryos and may be required for strd-1 protein stabilization. May regulate the integrity of the early embryonic cortex in a strd-1-dependent manner. Phosphorylates and regulates aak-2 in response to oxidative stress and during dauer development. May also play a role in motility, behavioral response, regulation of lifespan and dauer formation through this pathway. Required to establish germline stem cell (GSC) quiescence during dauer development. Acts downstream of unc-40 in dendrite outgrowth. May play a role in cell shedding during embryogenesis, probably by phosphorylating pig-1. The sequence is that of Serine/threonine-protein kinase par-4 (par-4) from Caenorhabditis elegans.